The sequence spans 202 residues: Flagellar transcriptional regulator FlhC (202 aa).

Zn(2+)-binding residues include Cys-137, Cys-140, Cys-157, and Cys-160.

This sequence belongs to the FlhC family. Heterohexamer composed of two FlhC and four FlhD subunits. Each FlhC binds a FlhD dimer, forming a heterotrimer, and a hexamer assembles by dimerization of two heterotrimers. The cofactor is Zn(2+).

Its subcellular location is the cytoplasm. Functions in complex with FlhD as a master transcriptional regulator that regulates transcription of several flagellar and non-flagellar operons by binding to their promoter region. Activates expression of class 2 flagellar genes, including fliA, which is a flagellum-specific sigma factor that turns on the class 3 genes. Also regulates genes whose products function in a variety of physiological pathways. This is Flagellar transcriptional regulator FlhC from Variovorax paradoxus (strain S110).